The sequence spans 390 residues: Putative gustatory receptor 36c (390 aa).

The Cytoplasmic portion of the chain corresponds to 1-4 (MDLE). Residues 5–25 (SFLLGAVYYYGLFIGLSNFEF) traverse the membrane as a helical segment. Topologically, residues 26-36 (DWNTGRVFTKK) are extracellular. Residues 37 to 57 (WSTLYAIALDSCIFALYIYHW) traverse the membrane as a helical segment. Topologically, residues 58–75 (TGNTNIVNAIFGRANMLH) are cytoplasmic. Residues 76–96 (EYVVAILTGLRIVTGLFTLIL) form a helical membrane-spanning segment. Over 97–132 (RWYQRCKMMDLASKVVRMYVARPQVRRMSRWGILTK) the chain is Extracellular. The chain crosses the membrane as a helical span at residues 133 to 153 (FIFGSITDGLQMAMVLSAMGS). The Cytoplasmic portion of the chain corresponds to 154-165 (VDSQFYLGLGLQ). Residues 166–186 (YWMFVILNMAMMQQHMIMLFV) form a helical membrane-spanning segment. The Extracellular segment spans residues 187 to 254 (RTQFQLINTE…MEEVFGIQGA (68 aa)). The chain crosses the membrane as a helical span at residues 255-275 (MTYGGYYLSSVGTCYLAYSIL). Residues 276–288 (KHGYENLSMTLST) lie on the Cytoplasmic side of the membrane. Residues 289–309 (VILAYSWCFFYYLDGMLNLSV) traverse the membrane as a helical segment. Residues 310–390 (MLHVQDDYWE…FLIQYDIEHF (81 aa)) are Extracellular-facing.

The protein belongs to the insect chemoreceptor superfamily. Gustatory receptor (GR) family. Gr22e subfamily. In terms of tissue distribution, expressed in neurons of the terminal external chemosensory organ of larvae.

It is found in the cell membrane. Its function is as follows. Probable gustatory receptor which mediates acceptance or avoidance behavior, depending on its substrates. This is Putative gustatory receptor 36c (Gr36c) from Drosophila melanogaster (Fruit fly).